Consider the following 1160-residue polypeptide: Major DNA-binding protein (1160 aa).

Residues 808-809 (FW) carry the Required for filament formation motif. Residues 1139 to 1160 (ARGGEHAFDEDCGLLPAKRGRL) are required for nuclear localization.

The protein belongs to the herpesviridae major DNA-binding protein family. Homooligomers. Forms double-helical filaments necessary for the formation of replication compartments within the host nucleus. Interacts with the origin-binding protein. Interacts with the helicase primase complex; this interaction stimulates primer synthesis activity of the helicase-primase complex. Interacts with the DNA polymerase. Interacts with the alkaline exonuclease; this interaction increases its nuclease processivity.

Its subcellular location is the host nucleus. Functionally, single-stranded DNA-binding protein required for DNA replication. Its function is as follows. Plays several crucial roles in viral infection. Participates in the opening of the viral DNA origin to initiate replication by interacting with the origin-binding protein. May disrupt loops, hairpins and other secondary structures present on ssDNA to reduce and eliminate pausing of viral DNA polymerase at specific sites during elongation. Promotes viral DNA recombination by performing strand-transfer, characterized by the ability to transfer a DNA strand from a linear duplex to a complementary single-stranded DNA circle. Can also catalyze the renaturation of complementary single strands. Additionally, reorganizes the host cell nucleus, leading to the formation of prereplicative sites and replication compartments. This process is driven by the protein which can form double-helical filaments in the absence of DNA. The protein is Major DNA-binding protein of Simian cytomegalovirus (strain Colburn).